Consider the following 163-residue polypeptide: Small ribosomal subunit protein uS5 (163 aa).

The region spanning 8 to 71 (LVEKIVYLNR…ERAKKDMVQI (64 aa)) is the S5 DRBM domain.

The protein belongs to the universal ribosomal protein uS5 family. As to quaternary structure, part of the 30S ribosomal subunit. Contacts proteins S4 and S8.

Functionally, with S4 and S12 plays an important role in translational accuracy. In terms of biological role, located at the back of the 30S subunit body where it stabilizes the conformation of the head with respect to the body. The polypeptide is Small ribosomal subunit protein uS5 (Nitratidesulfovibrio vulgaris (strain DSM 19637 / Miyazaki F) (Desulfovibrio vulgaris)).